The primary structure comprises 629 residues: Embryonic polyadenylate-binding protein (629 aa).

RRM domains lie at 11–89 (ASLY…WSQR), 99–175 (GNVF…HFKS), 191–268 (TNVY…RAQK), and 294–370 (VNLY…LAQR). The 78-residue stretch at 539 to 616 (QEPLTASSLA…AVAVLQAHQA (78 aa)) folds into the PABC domain.

The protein belongs to the polyadenylate-binding protein type-1 family. As to quaternary structure, interacts with dazl in an RNA-independent manner. The C-terminus can self-associate and also interact with the C-terminus of pabpc1, independently of RNA. RRM 1 and RRM 2 interact with both eif4g1 and paip1, and the C-terminus also interacts with paip1. Prior to oocyte maturation, found in a complex with dazl and pum2 proteins and spdy1 mRNA; pum2 dissociates from the complex during maturation. Interacts with the translation termination factor sup35/erf3.

The protein resides in the cytoplasm. Functionally, binds and protects the poly(A) tail of mRNA with or without an AU-rich element (ARE) and prevents mRNA deadenylation. Stimulates the translation of mRNAs to which it is bound during early development. This is Embryonic polyadenylate-binding protein from Xenopus tropicalis (Western clawed frog).